Consider the following 646-residue polypeptide: Type I inositol polyphosphate 5-phosphatase 2 (646 aa).

Over residues 59–74 (TDEDSHNGRRGSEADH) the composition is skewed to basic and acidic residues. Disordered regions lie at residues 59-99 (TDED…GKSE), 185-207 (ESVY…SAPS), and 329-369 (IDNR…IRNS). A compositionally biased stretch (polar residues) spans 188-207 (YDQSPSCNNNALHRSHSAPS). Over residues 341 to 350 (EAAKIMHDDS) the composition is skewed to basic and acidic residues. Catalytic regions lie at residues 495–510 (DQVF…LNMS) and 575–590 (KKRA…WLGK).

The protein belongs to the inositol polyphosphate 5-phosphatase family. Expressed ubiquitously.

It catalyses the reaction 1D-myo-inositol 1,4,5-trisphosphate + H2O = 1D-myo-inositol 1,4-bisphosphate + phosphate. The catalysed reaction is 1D-myo-inositol 1,3,4,5-tetrakisphosphate + H2O = 1D-myo-inositol 1,3,4-trisphosphate + phosphate. In terms of biological role, has phosphatase activity toward Ins(1,4,5)P3 and Ins(1,3,4,5)P4. Seems to be involved in the abscisic acid (ABA) signaling pathway. Could also be able to hydrolyze PtdIns(4,5)P2 and PtdIns(3,4,5)P3. This Arabidopsis thaliana (Mouse-ear cress) protein is Type I inositol polyphosphate 5-phosphatase 2.